Here is a 160-residue protein sequence, read N- to C-terminus: MLALYQPDIPQNCGTMLRLCACLGVEAAIIEPAGFPVSDRHFRRAGMDYLDQVALSRHVSFTAFRAWQIETGRRLVLLSTKASQPYTDFTFRPDDILLMGRESAGVPEAVHASADARVVIPLRPPMRSLNVAVAAAMVLGEALRQVGALAKVMDAPRASL.

Residues leucine 78, glycine 100, isoleucine 120, and serine 128 each contribute to the S-adenosyl-L-methionine site.

The protein belongs to the class IV-like SAM-binding methyltransferase superfamily. RNA methyltransferase TrmH family. TrmL subfamily. As to quaternary structure, homodimer.

It is found in the cytoplasm. It carries out the reaction cytidine(34) in tRNA + S-adenosyl-L-methionine = 2'-O-methylcytidine(34) in tRNA + S-adenosyl-L-homocysteine + H(+). It catalyses the reaction 5-carboxymethylaminomethyluridine(34) in tRNA(Leu) + S-adenosyl-L-methionine = 5-carboxymethylaminomethyl-2'-O-methyluridine(34) in tRNA(Leu) + S-adenosyl-L-homocysteine + H(+). In terms of biological role, methylates the ribose at the nucleotide 34 wobble position in the two leucyl isoacceptors tRNA(Leu)(CmAA) and tRNA(Leu)(cmnm5UmAA). Catalyzes the methyl transfer from S-adenosyl-L-methionine to the 2'-OH of the wobble nucleotide. The sequence is that of tRNA (cytidine(34)-2'-O)-methyltransferase from Beijerinckia indica subsp. indica (strain ATCC 9039 / DSM 1715 / NCIMB 8712).